The primary structure comprises 219 residues: Small ribosomal subunit protein uS5 (219 aa).

The segment at 1 to 32 (MSHPQSRPGGRDGRPRRRREPREEAPWVPKTA) is disordered. An S5 DRBM domain is found at 68–131 (LKTEVVDVGI…NQALLNVGPI (64 aa)).

This sequence belongs to the universal ribosomal protein uS5 family. Part of the 30S ribosomal subunit. Contacts protein S4.

In terms of biological role, with S4 and S12 plays an important role in translational accuracy. In Cenarchaeum symbiosum (strain A), this protein is Small ribosomal subunit protein uS5 (rps5).